We begin with the raw amino-acid sequence, 523 residues long: Nuclear receptor ROR-alpha (523 aa).

The segment covering 1–26 has biased composition (low complexity); that stretch reads MESAPAAPDPAASEPGSSGADAAAGS. Positions 1–63 are disordered; it reads MESAPAAPDP…SRGISVTKKT (63 aa). The residue at position 38 (Lys-38) is an N6-methyllysine. The span at 48-57 shows a compositional bias: polar residues; that stretch reads QSYSSTSRGI. 2 NR C4-type zinc fingers span residues 73-93 and 109-133; these read CKIC…CEGC and CPRQ…LQKC. Residues 73–138 constitute a DNA-binding region (nuclear receptor); the sequence is CKICGDKSSG…RLQKCLAVGM (66 aa). Residues 154–183 form a disordered region; that stretch reads DSLYAEVQKHRMQQQQRDHQQQPGEAEPLT. A Phosphothreonine; by MAPK1 modification is found at Thr-183. Residue Lys-240 forms a Glycyl lysine isopeptide (Lys-Gly) (interchain with G-Cter in SUMO) linkage. Residues 272-510 enclose the NR LBD domain; that stretch reads ELEHLAQNIS…LHFPPLYKEL (239 aa). Positions 506 to 523 match the AF-2 motif; the sequence is LYKELFTSEFEPAMQIDG.

It belongs to the nuclear hormone receptor family. NR1 subfamily. As to quaternary structure, monomer. Interacts (via the DNA-binding domain) with HIF1A; the interaction enhances HIF1A transcription under hypoxia through increasing protein stability. Interacts with CEBPB; the interaction disrupts the interaction CEBPB:EP300. Interacts with the coactivators NCOA2, PPARGC1A (via LXXLL motif), EP300 and MED1. Interacts with the corepressor NCOR1. Interacts with MAGED1 and CTNNB1. Interacts with CRY1 and PER2. Interacts (via AF-2 motif) with PROX1. Interacts with NRIP1. Isoform 4 interacts (via AF-2 motif) with isoform 1 of FOXP3 (via LXXLL motif). In terms of processing, phosphorylation by conventional PKCs in neurons inhibits transcriptional activity. Phosphorylated on Thr-183 by MAPK1/ERK1 in vitro. Sumoylated by SENP1 and SENP2. Sumoylation, promoted by PIAS2, PIAS3, PIAS4 but not PIAS1, enhances the transcriptional activity. Desumoylated by SENP1. Post-translationally, ubiquitinated, leading to its degradation by the proteasome. Proteasomal degradation is required for efficient transcriptional activity and is prevented by HR. In terms of processing, monomethylated at Lys-38 by EZH2, this creates a degron recognized by a DCX (DDB1-DCAF1/VPRBP-CUL4A-RBX1) E3 ubiquitin ligase complex. As to expression, widely expressed in a number of tissues. Expressed in both regulatory T-cells (Treg) and effector T-cells (Teff). Isoform 4: Highly expressed in the central nervous system, including in the cerebellum.

Its subcellular location is the nucleus. Nuclear receptor that binds DNA as a monomer to ROR response elements (RORE) containing a single core motif half-site 5'-AGGTCA-3' preceded by a short A-T-rich sequence. Key regulator of embryonic development, cellular differentiation, immunity, circadian rhythm as well as lipid, steroid, xenobiotics and glucose metabolism. Considered to have intrinsic transcriptional activity, have some natural ligands like oxysterols that act as agonists (25-hydroxycholesterol) or inverse agonists (7-oxygenated sterols), enhancing or repressing the transcriptional activity, respectively. Recruits distinct combinations of cofactors to target genes regulatory regions to modulate their transcriptional expression, depending on the tissue, time and promoter contexts. Regulates genes involved in photoreceptor development including OPN1SW, OPN1SM and ARR3 and skeletal muscle development with MYOD1. Required for proper cerebellum development. Regulates SHH gene expression, among others, to induce granule cells proliferation as well as expression of genes involved in calcium-mediated signal transduction. Regulates the circadian expression of several clock genes, including CLOCK, BMAL1, NPAS2 and CRY1. Competes with NR1D1 for binding to their shared DNA response element on some clock genes such as BMAL1, CRY1 and NR1D1 itself, resulting in NR1D1-mediated repression or RORA-mediated activation of clock genes expression, leading to the circadian pattern of clock genes expression. Therefore influences the period length and stability of the clock. Regulates genes involved in lipid metabolism such as apolipoproteins APOA1, APOA5, APOC3 and PPARG. In liver, has specific and redundant functions with RORC as positive or negative modulator of expression of genes encoding phase I and phase II proteins involved in the metabolism of lipids, steroids and xenobiotics, such as CYP7B1 and SULT2A1. Induces a rhythmic expression of some of these genes. In addition, interplays functionally with NR1H2 and NR1H3 for the regulation of genes involved in cholesterol metabolism. Also involved in the regulation of hepatic glucose metabolism through the modulation of G6PC1 and PCK1. In adipose tissue, plays a role as negative regulator of adipocyte differentiation, probably acting through dual mechanisms. May suppress CEBPB-dependent adipogenesis through direct interaction and PPARG-dependent adipogenesis through competition for DNA-binding. Downstream of IL6 and TGFB and synergistically with RORC isoform 2, is implicated in the lineage specification of uncommitted CD4(+) T-helper (T(H)) cells into T(H)17 cells, antagonizing the T(H)1 program. Probably regulates IL17 and IL17F expression on T(H) by binding to the essential enhancer conserved non-coding sequence 2 (CNS2) in the IL17-IL17F locus. Involved in hypoxia signaling by interacting with and activating the transcriptional activity of HIF1A. May inhibit cell growth in response to cellular stress. May exert an anti-inflammatory role by inducing CHUK expression and inhibiting NF-kappa-B signaling. In Homo sapiens (Human), this protein is Nuclear receptor ROR-alpha (RORA).